Reading from the N-terminus, the 345-residue chain is Protein RecA (345 aa).

65–72 serves as a coordination point for ATP; it reads GPESSGKT.

This sequence belongs to the RecA family.

It is found in the cytoplasm. In terms of biological role, can catalyze the hydrolysis of ATP in the presence of single-stranded DNA, the ATP-dependent uptake of single-stranded DNA by duplex DNA, and the ATP-dependent hybridization of homologous single-stranded DNAs. It interacts with LexA causing its activation and leading to its autocatalytic cleavage. In Hahella chejuensis (strain KCTC 2396), this protein is Protein RecA.